Consider the following 237-residue polypeptide: Phosphatidylserine decarboxylase proenzyme (237 aa).

Ser206 functions as the Schiff-base intermediate with substrate; via pyruvic acid in the catalytic mechanism. Residue Ser206 is modified to Pyruvic acid (Ser); by autocatalysis.

This sequence belongs to the phosphatidylserine decarboxylase family. PSD-A subfamily. In terms of assembly, heterodimer of a large membrane-associated beta subunit and a small pyruvoyl-containing alpha subunit. It depends on pyruvate as a cofactor. Post-translationally, is synthesized initially as an inactive proenzyme. Formation of the active enzyme involves a self-maturation process in which the active site pyruvoyl group is generated from an internal serine residue via an autocatalytic post-translational modification. Two non-identical subunits are generated from the proenzyme in this reaction, and the pyruvate is formed at the N-terminus of the alpha chain, which is derived from the carboxyl end of the proenzyme. The post-translation cleavage follows an unusual pathway, termed non-hydrolytic serinolysis, in which the side chain hydroxyl group of the serine supplies its oxygen atom to form the C-terminus of the beta chain, while the remainder of the serine residue undergoes an oxidative deamination to produce ammonia and the pyruvoyl prosthetic group on the alpha chain.

Its subcellular location is the cell membrane. It carries out the reaction a 1,2-diacyl-sn-glycero-3-phospho-L-serine + H(+) = a 1,2-diacyl-sn-glycero-3-phosphoethanolamine + CO2. It participates in phospholipid metabolism; phosphatidylethanolamine biosynthesis; phosphatidylethanolamine from CDP-diacylglycerol: step 2/2. Functionally, catalyzes the formation of phosphatidylethanolamine (PtdEtn) from phosphatidylserine (PtdSer). This is Phosphatidylserine decarboxylase proenzyme from Nocardia farcinica (strain IFM 10152).